The chain runs to 291 residues: UDP-N-acetylenolpyruvoylglucosamine reductase (291 aa).

Positions 19 to 186 (GIGGPAEWIA…VSARLKLASG (168 aa)) constitute an FAD-binding PCMH-type domain. Arginine 165 is an active-site residue. Serine 215 functions as the Proton donor in the catalytic mechanism. The active site involves glutamate 285.

Belongs to the MurB family. It depends on FAD as a cofactor.

It localises to the cytoplasm. The enzyme catalyses UDP-N-acetyl-alpha-D-muramate + NADP(+) = UDP-N-acetyl-3-O-(1-carboxyvinyl)-alpha-D-glucosamine + NADPH + H(+). It functions in the pathway cell wall biogenesis; peptidoglycan biosynthesis. Its function is as follows. Cell wall formation. The chain is UDP-N-acetylenolpyruvoylglucosamine reductase from Prochlorococcus marinus (strain NATL2A).